The primary structure comprises 188 residues: MSVLPTPLANQLLIALPALSDPTFSRSVALICQHDENGAMGVLVNRPSEYTLGEVLSQMGIDTDDEPLREQVVLSGGPVHPERGFVIHDDAREWDSSLEVGQGVFLTTSRDILEAMAAGNGPRNALVALGCAGWGAGQLEFELGENSWLTAPSDANVLFATALEDRWQTAAGRIGVDLFRLTDYSGHA.

It belongs to the UPF0301 (AlgH) family.

This Xanthomonas euvesicatoria pv. vesicatoria (strain 85-10) (Xanthomonas campestris pv. vesicatoria) protein is UPF0301 protein XCV3063.